Here is a 397-residue protein sequence, read N- to C-terminus: Cysteine desulfurase IscS (397 aa).

Pyridoxal 5'-phosphate is bound by residues glycine 72 to serine 73, asparagine 152, glutamine 180, and serine 200 to histidine 202. Lysine 203 carries the post-translational modification N6-(pyridoxal phosphate)lysine. Residue threonine 238 participates in pyridoxal 5'-phosphate binding. Residue cysteine 328 is the Cysteine persulfide intermediate of the active site. Cysteine 328 is a binding site for [2Fe-2S] cluster.

It belongs to the class-V pyridoxal-phosphate-dependent aminotransferase family. NifS/IscS subfamily. Homodimer. Forms a heterotetramer with IscU, interacts with other sulfur acceptors. The cofactor is pyridoxal 5'-phosphate.

The protein resides in the cytoplasm. It catalyses the reaction (sulfur carrier)-H + L-cysteine = (sulfur carrier)-SH + L-alanine. Its pathway is cofactor biosynthesis; iron-sulfur cluster biosynthesis. Master enzyme that delivers sulfur to a number of partners involved in Fe-S cluster assembly, tRNA modification or cofactor biosynthesis. Catalyzes the removal of elemental sulfur atoms from cysteine to produce alanine. Functions as a sulfur delivery protein for Fe-S cluster synthesis onto IscU, an Fe-S scaffold assembly protein, as well as other S acceptor proteins. This is Cysteine desulfurase IscS from Clostridium botulinum (strain Kyoto / Type A2).